We begin with the raw amino-acid sequence, 279 residues long: Probable endonuclease 4 (279 aa).

Zn(2+) contacts are provided by His69, His109, Glu145, Asp179, His182, His216, Asp229, His231, and Glu261.

The protein belongs to the AP endonuclease 2 family. The cofactor is Zn(2+).

The catalysed reaction is Endonucleolytic cleavage to 5'-phosphooligonucleotide end-products.. Its function is as follows. Endonuclease IV plays a role in DNA repair. It cleaves phosphodiester bonds at apurinic or apyrimidinic (AP) sites, generating a 3'-hydroxyl group and a 5'-terminal sugar phosphate. This is Probable endonuclease 4 from Desulforapulum autotrophicum (strain ATCC 43914 / DSM 3382 / VKM B-1955 / HRM2) (Desulfobacterium autotrophicum).